The chain runs to 116 residues: Phosphoribosyl-ATP pyrophosphatase (116 aa).

The protein belongs to the PRA-PH family.

It localises to the cytoplasm. The enzyme catalyses 1-(5-phospho-beta-D-ribosyl)-ATP + H2O = 1-(5-phospho-beta-D-ribosyl)-5'-AMP + diphosphate + H(+). Its pathway is amino-acid biosynthesis; L-histidine biosynthesis; L-histidine from 5-phospho-alpha-D-ribose 1-diphosphate: step 2/9. In Nitrobacter winogradskyi (strain ATCC 25391 / DSM 10237 / CIP 104748 / NCIMB 11846 / Nb-255), this protein is Phosphoribosyl-ATP pyrophosphatase.